Reading from the N-terminus, the 434-residue chain is ATP-dependent RNA helicase uap56 (434 aa).

The interval methionine 1–glycine 43 is disordered. Residues aspartate 7–valine 18 are compositionally biased toward acidic residues. The Q motif motif lies at threonine 51–glutamine 79. In terms of domain architecture, Helicase ATP-binding spans isoleucine 82–isoleucine 257. Residue alanine 95–threonine 102 coordinates ATP. The short motif at aspartate 204–aspartate 207 is the DECD box element. Positions glycine 269–serine 430 constitute a Helicase C-terminal domain.

This sequence belongs to the DEAD box helicase family. DECD subfamily. As to quaternary structure, interacts with mlo3 and rae1.

It localises to the nucleus. The enzyme catalyses ATP + H2O = ADP + phosphate + H(+). In terms of biological role, ATP-binding RNA helicase involved in transcription elongation and required for the export of mRNA out of the nucleus. SUB2 also plays a role in pre-mRNA splicing and spliceosome assembly. May be involved in rDNA and telomeric silencing, and maintenance of genome integrity. Links the mRNA adapter mlo3 to rae1 for targeting mRNA-protein complex to the proteins of the nucleoporin complex (NPC). This is ATP-dependent RNA helicase uap56 (uap56) from Schizosaccharomyces pombe (strain 972 / ATCC 24843) (Fission yeast).